The chain runs to 404 residues: Formate-dependent phosphoribosylglycinamide formyltransferase (404 aa).

Residues 25 to 26 and Glu85 contribute to the N(1)-(5-phospho-beta-D-ribosyl)glycinamide site; that span reads EL. ATP contacts are provided by residues Arg118, Lys159, 164–169, 199–202, and Glu207; these read SSGKGQ and EGFV. Residues 123 to 318 form the ATP-grasp domain; it reads RLAAEELGLP…EFELHARAIL (196 aa). Mg(2+) is bound by residues Glu277 and Glu289. Residues Asp296, Lys365, and 372 to 373 contribute to the N(1)-(5-phospho-beta-D-ribosyl)glycinamide site; that span reads RR.

The protein belongs to the PurK/PurT family. As to quaternary structure, homodimer.

The enzyme catalyses N(1)-(5-phospho-beta-D-ribosyl)glycinamide + formate + ATP = N(2)-formyl-N(1)-(5-phospho-beta-D-ribosyl)glycinamide + ADP + phosphate + H(+). The protein operates within purine metabolism; IMP biosynthesis via de novo pathway; N(2)-formyl-N(1)-(5-phospho-D-ribosyl)glycinamide from N(1)-(5-phospho-D-ribosyl)glycinamide (formate route): step 1/1. Its function is as follows. Involved in the de novo purine biosynthesis. Catalyzes the transfer of formate to 5-phospho-ribosyl-glycinamide (GAR), producing 5-phospho-ribosyl-N-formylglycinamide (FGAR). Formate is provided by PurU via hydrolysis of 10-formyl-tetrahydrofolate. The sequence is that of Formate-dependent phosphoribosylglycinamide formyltransferase from Burkholderia thailandensis (strain ATCC 700388 / DSM 13276 / CCUG 48851 / CIP 106301 / E264).